The following is a 338-amino-acid chain: Lipoate-protein ligase A (338 aa).

A BPL/LPL catalytic domain is found at 29–216 (SPDQRVLFLW…AFFAYYDEQV (188 aa)). ATP-binding positions include R71, 76–79 (GAVF), and K134. K134 is a (R)-lipoate binding site.

Belongs to the LplA family. As to quaternary structure, monomer.

The protein resides in the cytoplasm. The enzyme catalyses L-lysyl-[lipoyl-carrier protein] + (R)-lipoate + ATP = N(6)-[(R)-lipoyl]-L-lysyl-[lipoyl-carrier protein] + AMP + diphosphate + H(+). It participates in protein modification; protein lipoylation via exogenous pathway; protein N(6)-(lipoyl)lysine from lipoate: step 1/2. It functions in the pathway protein modification; protein lipoylation via exogenous pathway; protein N(6)-(lipoyl)lysine from lipoate: step 2/2. In terms of biological role, catalyzes both the ATP-dependent activation of exogenously supplied lipoate to lipoyl-AMP and the transfer of the activated lipoyl onto the lipoyl domains of lipoate-dependent enzymes. The sequence is that of Lipoate-protein ligase A from Yersinia pseudotuberculosis serotype IB (strain PB1/+).